We begin with the raw amino-acid sequence, 439 residues long: Ribosomal protein uS12 methylthiotransferase RimO (439 aa).

Positions 3–115 constitute an MTTase N-terminal domain; it reads KKLHLISLGC…IDQMVRERQG (113 aa). [4Fe-4S] cluster is bound by residues C12, C46, C78, C147, C151, and C154. The 230-residue stretch at 133–362 folds into the Radical SAM core domain; that stretch reads TGSSVHAYVK…DKIIQKQHRA (230 aa).

The protein belongs to the methylthiotransferase family. RimO subfamily. [4Fe-4S] cluster is required as a cofactor.

It is found in the cytoplasm. It catalyses the reaction L-aspartate(89)-[ribosomal protein uS12]-hydrogen + (sulfur carrier)-SH + AH2 + 2 S-adenosyl-L-methionine = 3-methylsulfanyl-L-aspartate(89)-[ribosomal protein uS12]-hydrogen + (sulfur carrier)-H + 5'-deoxyadenosine + L-methionine + A + S-adenosyl-L-homocysteine + 2 H(+). Its function is as follows. Catalyzes the methylthiolation of an aspartic acid residue of ribosomal protein uS12. This is Ribosomal protein uS12 methylthiotransferase RimO from Wolinella succinogenes (strain ATCC 29543 / DSM 1740 / CCUG 13145 / JCM 31913 / LMG 7466 / NCTC 11488 / FDC 602W) (Vibrio succinogenes).